Here is a 546-residue protein sequence, read N- to C-terminus: Pyrophosphate--fructose 6-phosphate 1-phosphotransferase (546 aa).

Glycine 80 lines the diphosphate pocket. Aspartate 174 contributes to the Mg(2+) binding site. Residues 202 to 204 (TID), 241 to 242 (KY), 249 to 251 (MGR), glutamate 310, and 420 to 423 (YEGR) contribute to the substrate site. Catalysis depends on aspartate 204, which acts as the Proton acceptor.

It belongs to the phosphofructokinase type A (PFKA) family. PPi-dependent PFK group II subfamily. Clade 'Long' sub-subfamily. As to quaternary structure, homodimer. Mg(2+) is required as a cofactor. The cofactor is Mn(2+).

Its subcellular location is the cytoplasm. It carries out the reaction beta-D-fructose 6-phosphate + diphosphate = beta-D-fructose 1,6-bisphosphate + phosphate + H(+). The protein operates within carbohydrate degradation; glycolysis; D-glyceraldehyde 3-phosphate and glycerone phosphate from D-glucose: step 3/4. Its activity is regulated as follows. Non-allosteric. Competitively inhibited by PPi, Pi and fructose 1,6-bisphosphate. Its function is as follows. Catalyzes the phosphorylation of D-fructose 6-phosphate, the first committing step of glycolysis. Uses inorganic phosphate (PPi) as phosphoryl donor instead of ATP like common ATP-dependent phosphofructokinases (ATP-PFKs), which renders the reaction reversible, and can thus function both in glycolysis and gluconeogenesis. Consistently, PPi-PFK can replace the enzymes of both the forward (ATP-PFK) and reverse (fructose-bisphosphatase (FBPase)) reactions. This Entamoeba histolytica (strain ATCC 30459 / HM-1:IMSS / ABRM) protein is Pyrophosphate--fructose 6-phosphate 1-phosphotransferase.